The sequence spans 106 residues: Large ribosomal subunit protein uL24 (106 aa).

It belongs to the universal ribosomal protein uL24 family. Part of the 50S ribosomal subunit.

Functionally, one of two assembly initiator proteins, it binds directly to the 5'-end of the 23S rRNA, where it nucleates assembly of the 50S subunit. Its function is as follows. One of the proteins that surrounds the polypeptide exit tunnel on the outside of the subunit. This Bordetella bronchiseptica (strain ATCC BAA-588 / NCTC 13252 / RB50) (Alcaligenes bronchisepticus) protein is Large ribosomal subunit protein uL24.